The chain runs to 260 residues: Carbonic anhydrase (260 aa).

The tract at residues 1–31 is disordered; that stretch reads MAHAWGYGPADGPESWAESFPIANGPRQSPI. One can recognise an Alpha-carbonic anhydrase domain in the interval 3–259; the sequence is HAWGYGPADG…LKGRKVRASF (257 aa). Residue His64 is the Proton acceptor of the active site. Positions 94, 96, and 119 each coordinate Zn(2+). Tyr127 is a catalytic residue. Position 198–199 (198–199) interacts with substrate; that stretch reads TT.

This sequence belongs to the alpha-carbonic anhydrase family. Zn(2+) is required as a cofactor.

It carries out the reaction hydrogencarbonate + H(+) = CO2 + H2O. In terms of biological role, reversible hydration of carbon dioxide. This Danio rerio (Zebrafish) protein is Carbonic anhydrase (cahz).